Reading from the N-terminus, the 497-residue chain is Vacuolar-processing enzyme beta-isozyme 1 (497 aa).

An N-terminal signal peptide occupies residues 1–23 (MAARCWVWGFVVALLAVAAAADG). N153 carries an N-linked (GlcNAc...) asparagine glycan. The active site involves H180. Catalysis depends on C222, which acts as the Nucleophile. The cysteines at positions 255 and 269 are disulfide-linked. N340 carries an N-linked (GlcNAc...) asparagine glycan. Disulfide bonds link C432–C462 and C444–C479.

The protein belongs to the peptidase C13 family. Post-translationally, auto-catalytic activation. Expressed in developing seeds.

It is found in the protein storage vacuole. The catalysed reaction is Hydrolysis of proteins and small molecule substrates at -Asn-|-Xaa- bonds.. Its function is as follows. Asparagine-specific endopeptidase that may be involved in processing of proteins targeted to vacuoles. Cysteine protease required for post-translational proteolysis of seed storage proteins in the protein storage vacuole (PSV) of developing seeds, by processing of proglutelin precursor to mature glutelin subunits, thus contributing to the formation of protein crystalline structures in PSV. The polypeptide is Vacuolar-processing enzyme beta-isozyme 1 (Oryza sativa subsp. japonica (Rice)).